Here is a 206-residue protein sequence, read N- to C-terminus: MFSPNFVLASASPARLKLLQTIGINPIVRPSHFDESKIVSDNPRELVEILAKSKAQTIAPDFPESLILGCDSLLVVRGEIYGKPNSPEEAIARWETMQGHHGTLYTGHTLIDTKQHKTLVRCGITEVYFASLDRPTIEAYVNSGEPLKCAGCFALEGKGGLFVDKIEGCHSNVIGLSLPLLRQILQELGYQIAQFWDSRSTPKNEY.

Asp71 (proton acceptor) is an active-site residue.

It belongs to the Maf family. A divalent metal cation serves as cofactor.

The protein resides in the cytoplasm. The enzyme catalyses a ribonucleoside 5'-triphosphate + H2O = a ribonucleoside 5'-phosphate + diphosphate + H(+). The catalysed reaction is a 2'-deoxyribonucleoside 5'-triphosphate + H2O = a 2'-deoxyribonucleoside 5'-phosphate + diphosphate + H(+). In terms of biological role, nucleoside triphosphate pyrophosphatase. May have a dual role in cell division arrest and in preventing the incorporation of modified nucleotides into cellular nucleic acids. The polypeptide is Nucleoside triphosphate pyrophosphatase (Rippkaea orientalis (strain PCC 8801 / RF-1) (Cyanothece sp. (strain PCC 8801))).